We begin with the raw amino-acid sequence, 257 residues long: V-type proton ATPase subunit D (257 aa).

Residues 211–233 form a disordered region; sequence KKKDLKAKEAQKEENSANKTIME. Basic and acidic residues predominate over residues 216-226; sequence KAKEAQKEENS.

The protein belongs to the V-ATPase D subunit family. In terms of assembly, V-ATPase is a heteromultimeric enzyme composed of a peripheral catalytic V1 complex (components A to H) attached to an integral membrane V0 proton pore complex (components: a, c, c', c'' and d).

Its function is as follows. Subunit of the peripheral V1 complex of vacuolar ATPase. Vacuolar ATPase is responsible for acidifying a variety of intracellular compartments in eukaryotic cells, thus providing most of the energy required for transport processes in the vacuolar system. The polypeptide is V-type proton ATPase subunit D (atp6v1d) (Dictyostelium discoideum (Social amoeba)).